Reading from the N-terminus, the 419-residue chain is Ras association domain-containing protein 8 (419 aa).

One can recognise a Ras-associating domain in the interval 1 to 82 (MELKVWVDGV…VQLILRRTGP (82 aa)). Phosphoserine occurs at positions 105 and 129. Residue Thr131 is modified to Phosphothreonine. Residues 372-399 (ASQADIETEAPFQSGSLKRPGSSRQLPS) form a disordered region. Residues 382–399 (PFQSGSLKRPGSSRQLPS) are compositionally biased toward polar residues. Ser387 bears the Phosphoserine mark.

The chain is Ras association domain-containing protein 8 (Rassf8) from Mus musculus (Mouse).